The chain runs to 203 residues: Holliday junction branch migration complex subunit RuvA (203 aa).

Positions 1–64 are domain I; that stretch reads MIGRLRGIII…EDAQLLYGFN (64 aa). The tract at residues 65–142 is domain II; it reads NKQERTLFKE…KGLHGDLFTP (78 aa). The flexible linker stretch occupies residues 143 to 154; it reads AADLVLTSPASP. The interval 155–203 is domain III; it reads ATDDAEQEAVAALVALGYKPQEASRMVSKIARPDASSETLIREALRAAL.

It belongs to the RuvA family. In terms of assembly, homotetramer. Forms an RuvA(8)-RuvB(12)-Holliday junction (HJ) complex. HJ DNA is sandwiched between 2 RuvA tetramers; dsDNA enters through RuvA and exits via RuvB. An RuvB hexamer assembles on each DNA strand where it exits the tetramer. Each RuvB hexamer is contacted by two RuvA subunits (via domain III) on 2 adjacent RuvB subunits; this complex drives branch migration. In the full resolvosome a probable DNA-RuvA(4)-RuvB(12)-RuvC(2) complex forms which resolves the HJ.

The protein localises to the cytoplasm. Its function is as follows. The RuvA-RuvB-RuvC complex processes Holliday junction (HJ) DNA during genetic recombination and DNA repair, while the RuvA-RuvB complex plays an important role in the rescue of blocked DNA replication forks via replication fork reversal (RFR). RuvA specifically binds to HJ cruciform DNA, conferring on it an open structure. The RuvB hexamer acts as an ATP-dependent pump, pulling dsDNA into and through the RuvAB complex. HJ branch migration allows RuvC to scan DNA until it finds its consensus sequence, where it cleaves and resolves the cruciform DNA. This is Holliday junction branch migration complex subunit RuvA from Shigella boydii serotype 18 (strain CDC 3083-94 / BS512).